Here is an 861-residue protein sequence, read N- to C-terminus: DNA mismatch repair protein MutS (861 aa).

Residue 617–624 (GPNMGGKS) coordinates ATP. Residues 799–822 (ETTSLPHEQPPAAKAKDAPQVPHQ) are disordered. Positions 808 to 820 (PPAAKAKDAPQVP) are enriched in low complexity.

The protein belongs to the DNA mismatch repair MutS family.

Functionally, this protein is involved in the repair of mismatches in DNA. It is possible that it carries out the mismatch recognition step. This protein has a weak ATPase activity. In Pseudomonas putida (strain GB-1), this protein is DNA mismatch repair protein MutS.